The following is a 95-amino-acid chain: Beta-defensin 132 (95 aa).

Positions 1 to 22 are cleaved as a signal peptide; the sequence is MKFLLLVLAALGFLTQVIPASG. Cystine bridges form between C27–C55, C35–C49, and C39–C56. The segment at 72–95 is disordered; it reads GNHWPSRSRNTQRKNKKQQTTVTP.

Belongs to the beta-defensin family.

The protein localises to the secreted. Its function is as follows. Has antibacterial activity. The protein is Beta-defensin 132 (DEFB132) of Macaca fascicularis (Crab-eating macaque).